Here is a 206-residue protein sequence, read N- to C-terminus: Protein GrpE (206 aa).

It belongs to the GrpE family. Homodimer.

The protein localises to the cytoplasm. Participates actively in the response to hyperosmotic and heat shock by preventing the aggregation of stress-denatured proteins, in association with DnaK and GrpE. It is the nucleotide exchange factor for DnaK and may function as a thermosensor. Unfolded proteins bind initially to DnaJ; upon interaction with the DnaJ-bound protein, DnaK hydrolyzes its bound ATP, resulting in the formation of a stable complex. GrpE releases ADP from DnaK; ATP binding to DnaK triggers the release of the substrate protein, thus completing the reaction cycle. Several rounds of ATP-dependent interactions between DnaJ, DnaK and GrpE are required for fully efficient folding. This is Protein GrpE from Shewanella baltica (strain OS223).